We begin with the raw amino-acid sequence, 312 residues long: Aspartate carbamoyltransferase catalytic subunit (312 aa).

2 residues coordinate carbamoyl phosphate: R58 and T59. Position 86 (K86) interacts with L-aspartate. Carbamoyl phosphate contacts are provided by R108, H136, and Q139. L-aspartate is bound by residues R169 and R223. Positions 264 and 265 each coordinate carbamoyl phosphate.

This sequence belongs to the aspartate/ornithine carbamoyltransferase superfamily. ATCase family. As to quaternary structure, heterododecamer (2C3:3R2) of six catalytic PyrB chains organized as two trimers (C3), and six regulatory PyrI chains organized as three dimers (R2).

It catalyses the reaction carbamoyl phosphate + L-aspartate = N-carbamoyl-L-aspartate + phosphate + H(+). The protein operates within pyrimidine metabolism; UMP biosynthesis via de novo pathway; (S)-dihydroorotate from bicarbonate: step 2/3. Functionally, catalyzes the condensation of carbamoyl phosphate and aspartate to form carbamoyl aspartate and inorganic phosphate, the committed step in the de novo pyrimidine nucleotide biosynthesis pathway. The chain is Aspartate carbamoyltransferase catalytic subunit from Endomicrobium trichonymphae.